Here is a 515-residue protein sequence, read N- to C-terminus: 1-pyrroline-5-carboxylate dehydrogenase (515 aa).

Residues E286 and C320 contribute to the active site.

This sequence belongs to the aldehyde dehydrogenase family. RocA subfamily.

The enzyme catalyses L-glutamate 5-semialdehyde + NAD(+) + H2O = L-glutamate + NADH + 2 H(+). It functions in the pathway amino-acid degradation; L-proline degradation into L-glutamate; L-glutamate from L-proline: step 2/2. The sequence is that of 1-pyrroline-5-carboxylate dehydrogenase from Bacillus cereus (strain B4264).